The sequence spans 301 residues: MKKFSGIIPPVSSTFHRDGTLDKKAMREVADFLINKGVDGLFYLGTGGEFSQMNTAQRMALAEEAVTIVDGRVPVLIGVGSPSTDEAVKLAQHAQAYGADGIVAINPYYWKVAPRNLDDYYQQIARSVTLPVILYNFPDLTGQDLTPETVTRLALQNENIVGIKDTIDSVGHLRTMINTVKSVRPSFSVFCGYDDHLLNTMLLGGDGAITASANFAPELSVGIYRAWREGDLATAATLNKKLLQLPAIYALETPFVSLIKYSMQCVGLPVETYCLPPILEASEEAKDKVHVLLTAQGILPV.

Residues threonine 46 and tyrosine 109 each act as charge relay system in the active site. The active-site Proton donor is tyrosine 135. Lysine 164 acts as the Schiff-base intermediate with substrate in catalysis.

This sequence belongs to the DapA family.

Its subcellular location is the cytoplasm. It catalyses the reaction 2-dehydro-3-deoxy-D-arabinonate = glycolaldehyde + pyruvate. Functionally, functions as a 2-dehydro-3-deoxy-D-pentonate aldolase. This Escherichia coli (strain K12) protein is Probable 2-dehydro-3-deoxy-D-pentonate aldolase YjhH (yjhH).